The following is a 325-amino-acid chain: Beta-ketoacyl-[acyl-carrier-protein] synthase III (325 aa).

Active-site residues include Cys119 and His252. The ACP-binding stretch occupies residues 253–257; sequence QANIR. Asn282 is an active-site residue.

Belongs to the thiolase-like superfamily. FabH family. Homodimer.

The protein localises to the cytoplasm. The enzyme catalyses malonyl-[ACP] + acetyl-CoA + H(+) = 3-oxobutanoyl-[ACP] + CO2 + CoA. It participates in lipid metabolism; fatty acid biosynthesis. In terms of biological role, catalyzes the condensation reaction of fatty acid synthesis by the addition to an acyl acceptor of two carbons from malonyl-ACP. Catalyzes the first condensation reaction which initiates fatty acid synthesis and may therefore play a role in governing the total rate of fatty acid production. Possesses both acetoacetyl-ACP synthase and acetyl transacylase activities. Its substrate specificity determines the biosynthesis of branched-chain and/or straight-chain of fatty acids. The protein is Beta-ketoacyl-[acyl-carrier-protein] synthase III of Paracidovorax citrulli (strain AAC00-1) (Acidovorax citrulli).